The primary structure comprises 198 residues: Carnitine operon protein CaiE (198 aa).

The disordered stretch occupies residues 179-198 (VEENRPRLKGTTDVKPKSAQ). Basic and acidic residues predominate over residues 180–198 (EENRPRLKGTTDVKPKSAQ).

Belongs to the transferase hexapeptide repeat family.

Its pathway is amine and polyamine metabolism; carnitine metabolism. Overproduction of CaiE stimulates the activity of CaiB and CaiD. This Salmonella enteritidis PT4 (strain P125109) protein is Carnitine operon protein CaiE.